A 635-amino-acid chain; its full sequence is Probable extracellular metalloproteinase 1 (635 aa).

Residues 1 to 19 (MHGLLLAAGLLSLPLHVLA) form the signal peptide. The propeptide occupies 20–246 (HPQPSTSTSL…VHNVVDYVAH (227 aa)). Asparagine 287 carries an N-linked (GlcNAc...) asparagine glycan. Residue histidine 430 coordinates Zn(2+). Residue glutamate 431 is part of the active site. Zn(2+) is bound at residue histidine 434. N-linked (GlcNAc...) asparagine glycans are attached at residues asparagine 475, asparagine 594, and asparagine 623.

The protein belongs to the peptidase M36 family. It depends on Zn(2+) as a cofactor.

The protein localises to the secreted. Its function is as follows. Secreted metalloproteinase probably acting as a virulence factor. The protein is Probable extracellular metalloproteinase 1 (MEP1) of Trichophyton verrucosum (strain HKI 0517).